Reading from the N-terminus, the 349-residue chain is Aldehyde reductase YahK (349 aa).

Zn(2+) contacts are provided by Cys40, His62, Cys93, Cys96, Cys99, Cys107, and Cys158.

This sequence belongs to the zinc-containing alcohol dehydrogenase family. Requires Zn(2+) as cofactor.

The catalysed reaction is a primary alcohol + NADP(+) = an aldehyde + NADPH + H(+). Functionally, catalyzes the reduction of a wide range of aldehydes into their corresponding alcohols. Has a strong preference for NADPH over NADH as the electron donor. Cannot use a ketone as substrate. Is a major source of NADPH-dependent aldehyde reductase activity in E.coli. The in vivo functions of YahK has yet to be determined. The sequence is that of Aldehyde reductase YahK (yahK) from Escherichia coli (strain K12).